The following is a 226-amino-acid chain: Urease accessory protein UreE (226 aa).

Residues 192–226 (PHGSGLHIHSIHSHGDGHSHDHDHSHGDHDSDHKH) are disordered. Residues 204 to 226 (SHGDGHSHDHDHSHGDHDSDHKH) show a composition bias toward basic and acidic residues.

This sequence belongs to the UreE family.

It is found in the cytoplasm. Functionally, involved in urease metallocenter assembly. Binds nickel. Probably functions as a nickel donor during metallocenter assembly. The polypeptide is Urease accessory protein UreE (Yersinia intermedia).